The primary structure comprises 280 residues: Dermonecrotic toxin LgSicTox-alphaIC1 (280 aa).

Histidine 12 is a catalytic residue. The Mg(2+) site is built by glutamate 32 and aspartate 34. Histidine 48 (nucleophile) is an active-site residue. Cystine bridges form between cysteine 52-cysteine 58 and cysteine 54-cysteine 197. Aspartate 92 is a binding site for Mg(2+).

Belongs to the arthropod phospholipase D family. Class II subfamily. Requires Mg(2+) as cofactor. Expressed by the venom gland.

It is found in the secreted. The catalysed reaction is an N-(acyl)-sphingosylphosphocholine = an N-(acyl)-sphingosyl-1,3-cyclic phosphate + choline. It carries out the reaction an N-(acyl)-sphingosylphosphoethanolamine = an N-(acyl)-sphingosyl-1,3-cyclic phosphate + ethanolamine. The enzyme catalyses a 1-acyl-sn-glycero-3-phosphocholine = a 1-acyl-sn-glycero-2,3-cyclic phosphate + choline. It catalyses the reaction a 1-acyl-sn-glycero-3-phosphoethanolamine = a 1-acyl-sn-glycero-2,3-cyclic phosphate + ethanolamine. Dermonecrotic toxins cleave the phosphodiester linkage between the phosphate and headgroup of certain phospholipids (sphingolipid and lysolipid substrates), forming an alcohol (often choline) and a cyclic phosphate. This toxin acts on sphingomyelin (SM) with high activity. It may also act on ceramide phosphoethanolamine (CPE), lysophosphatidylcholine (LPC) and lysophosphatidylethanolamine (LPE), but not on lysophosphatidylserine (LPS), and lysophosphatidylglycerol (LPG). It acts by transphosphatidylation, releasing exclusively cyclic phosphate products as second products. Induces platelet aggregation in platelet rich plasma, but not in washed platelet, indicating that this activity is dependent on plasma components. Also induces hemolysis. In vivo, the recombinant protein evokes an intense inflammatory reaction and dermonecrosis, similar to those induced by L.gaucho total venom. Is a good immunogen, capable of inducing immunoprotection in test animals. In terms of biological role, anionic antimicrobial peptide that shows antimicrobial activity against Gram-negative bacteria (MIC=1.15-4.6 uM) (tested on E.coli, P.aeruginosa, and E.cloacae), but not on Gram-negative bacteria (M.luteus, S.aureus, and B.subtilis), neither on fungi and yeasts (A.niger, C.albicans and C.krusei). Does not show hemolytic effects against human erythrocytes, and has no cytotoxic effects against human cervical carcinoma cells (HeLa). This chain is Dermonecrotic toxin LgSicTox-alphaIC1, found in Loxosceles gaucho (Spider).